A 51-amino-acid polypeptide reads, in one-letter code: Ribosome biogenesis protein Nop10 (51 aa).

The protein belongs to the NOP10 family.

In terms of biological role, involved in ribosome biogenesis; more specifically in 18S rRNA pseudouridylation and in cleavage of pre-rRNA. The sequence is that of Ribosome biogenesis protein Nop10 from Nitrosopumilus maritimus (strain SCM1).